The following is a 182-amino-acid chain: CDP-diacylglycerol--glycerol-3-phosphate 3-phosphatidyltransferase (182 aa).

Residues Q2 to F12 lie on the Cytoplasmic side of the membrane. A helical transmembrane segment spans residues R13–L37. Residues I38–T60 lie on the Periplasmic side of the membrane. The helical transmembrane segment at R61–L81 threads the bilayer. The Cytoplasmic segment spans residues V82–Y86. Residues H87–A107 traverse the membrane as a helical segment. Residues L108–P145 are Periplasmic-facing. The chain crosses the membrane as a helical span at residues N146 to M168. Over L169–D181 the chain is Cytoplasmic.

This sequence belongs to the CDP-alcohol phosphatidyltransferase class-I family.

It is found in the cell inner membrane. The catalysed reaction is a CDP-1,2-diacyl-sn-glycerol + sn-glycerol 3-phosphate = a 1,2-diacyl-sn-glycero-3-phospho-(1'-sn-glycero-3'-phosphate) + CMP + H(+). The protein operates within phospholipid metabolism; phosphatidylglycerol biosynthesis; phosphatidylglycerol from CDP-diacylglycerol: step 1/2. In terms of biological role, catalyzes the conversion of cytidine diphosphate diacylglycerol (CDP-DG) and glycerol 3-phosphate into phosphatidylglycerol. Essential for the synthesis of anionic phospholipids, thereby playing a role in balancing the ratio of zwitterionic and anionic phospholipids, which is thought to be important for normal membrane function. The chain is CDP-diacylglycerol--glycerol-3-phosphate 3-phosphatidyltransferase from Salmonella choleraesuis (strain SC-B67).